A 198-amino-acid polypeptide reads, in one-letter code: Probable chemoreceptor glutamine deamidase CheD (198 aa).

The protein belongs to the CheD family.

The enzyme catalyses L-glutaminyl-[protein] + H2O = L-glutamyl-[protein] + NH4(+). Probably deamidates glutamine residues to glutamate on methyl-accepting chemotaxis receptors (MCPs), playing an important role in chemotaxis. This is Probable chemoreceptor glutamine deamidase CheD from Xanthomonas euvesicatoria pv. vesicatoria (strain 85-10) (Xanthomonas campestris pv. vesicatoria).